The chain runs to 121 residues: Small ribosomal subunit protein uS13 (121 aa).

The interval 93–121 (RGLPVRGQNTKNNARTRKGPRRTVANKKK) is disordered. The span at 106 to 121 (ARTRKGPRRTVANKKK) shows a compositional bias: basic residues.

It belongs to the universal ribosomal protein uS13 family. As to quaternary structure, part of the 30S ribosomal subunit. Forms a loose heterodimer with protein S19. Forms two bridges to the 50S subunit in the 70S ribosome.

Located at the top of the head of the 30S subunit, it contacts several helices of the 16S rRNA. In the 70S ribosome it contacts the 23S rRNA (bridge B1a) and protein L5 of the 50S subunit (bridge B1b), connecting the 2 subunits; these bridges are implicated in subunit movement. Contacts the tRNAs in the A and P-sites. This is Small ribosomal subunit protein uS13 from Bacillus pumilus (strain SAFR-032).